The following is a 469-amino-acid chain: Argininosuccinate lyase (469 aa).

This sequence belongs to the lyase 1 family. Argininosuccinate lyase subfamily.

It localises to the cytoplasm. The catalysed reaction is 2-(N(omega)-L-arginino)succinate = fumarate + L-arginine. The protein operates within amino-acid biosynthesis; L-arginine biosynthesis; L-arginine from L-ornithine and carbamoyl phosphate: step 3/3. This chain is Argininosuccinate lyase, found in Burkholderia lata (strain ATCC 17760 / DSM 23089 / LMG 22485 / NCIMB 9086 / R18194 / 383).